We begin with the raw amino-acid sequence, 147 residues long: UPF0306 protein YhbP (147 aa).

Belongs to the UPF0306 family.

In Salmonella choleraesuis (strain SC-B67), this protein is UPF0306 protein YhbP.